Consider the following 331-residue polypeptide: N-arachidonyl glycine receptor (331 aa).

At 1–26 (MITLNNQDQPVPFNNSYPDEYEIAAL) the chain is on the extracellular side. The N-linked (GlcNAc...) asparagine glycan is linked to Asn-14. The chain crosses the membrane as a helical span at residues 27-47 (VFYSCIFIIGLFVNITALWVF). Residues 48 to 56 (SCTTKKRTT) are Cytoplasmic-facing. The helical transmembrane segment at 57-77 (VTIYMMNVALVDLIFIMTLPF) threads the bilayer. Topologically, residues 78-95 (RMFYYAKDEWPFGEYFCQ) are extracellular. The cysteines at positions 94 and 172 are disulfide-linked. Residues 96 to 116 (ILGALTVFYPSIALWLLAFIS) traverse the membrane as a helical segment. The Cytoplasmic segment spans residues 117–138 (ADRYMAIVQPKYAKELKNTCKA). A helical transmembrane segment spans residues 139 to 159 (VLACVGVWIMTLTTTIPLLLL). The Extracellular segment spans residues 160–191 (HKDPDKDSTPATCLKISDIVYLKAVNVLNFTR). Asn-188 carries an N-linked (GlcNAc...) asparagine glycan. Residues 192 to 212 (LTFFFLIPLFIMIGCYLVIIH) traverse the membrane as a helical segment. At 213–232 (NLLHGRTSKLKPKVKEKSIR) the chain is on the cytoplasmic side. The chain crosses the membrane as a helical span at residues 233–253 (IIITLLVQVLVCFMPFHICFA). Topologically, residues 254-268 (FLMLGTGENSYSPWG) are extracellular. The helical transmembrane segment at 269-289 (AFTTFLMNLSTCLDVILYYIV) threads the bilayer. The Cytoplasmic segment spans residues 290 to 331 (SKQFQARVISVMLYRNYLRGMRRKSFRSGSLRSLSNINSEML). Ser-322 carries the post-translational modification Phosphoserine.

It belongs to the G-protein coupled receptor 1 family.

It localises to the cell membrane. It is found in the cytoplasmic vesicle membrane. Functionally, g protein-coupled receptor (GPCR) that plays a role in diverse physiological processes particularly within the immune and nervous systems. Becomes active when triggered by various endogenous ligands including endocannabinoid N-arachidonyl glycine (NAGly), delta-9-tetrahydrocannabinol or resolvin D2/RvD2 derived from the omega-3 fatty acid docosahexaenoic acid (DHA). Upon RvD2 binding, facilitates the resolution of inflammation, aiding in tissue repair and homeostasis. Mechanistically, RvD2 ligation initiates Galphas protein coupling, activation of cAMP-PKA signaling pathway and phosphorylation of STAT3, leading to RvD2-stimulated macrophage phagocytosis. Mediates NAGly-induced process of reorganization of actin filaments and induction of acrosomal exocytosis. Activation by N-arachidonoyl glycine (NAGly) can also induce apoptosis in macrophages. Plays a role in homeostasis of CD8+ subsets of intraepithelial lymphocytes (IELs) (CD8alphaalpha and CD8alphabeta IELs) in small intestine by supporting preferential migration of CD8alphaalpha T-cells to intraepithelial compartment over lamina propria compartment, and by mediating their reconstitution into small intestine after bone marrow transplant. Participates also in hypotensive responses, mediating reduction in intraocular and blood pressure. This chain is N-arachidonyl glycine receptor, found in Macaca fascicularis (Crab-eating macaque).